The chain runs to 340 residues: Arginase 1, mitochondrial (340 aa).

The N-terminal 24 residues, Met-1 to Thr-24, are a transit peptide targeting the mitochondrion. His-159, Asp-183, His-185, and Asp-187 together coordinate Mn(2+). Substrate contacts are provided by residues His-185–Tyr-189 and Glu-193–Asn-195. Positions 268 and 270 each coordinate Mn(2+). Glu-311 contributes to the substrate binding site.

This sequence belongs to the arginase family. It depends on Mn(2+) as a cofactor.

The protein localises to the mitochondrion. The enzyme catalyses L-arginine + H2O = urea + L-ornithine. It participates in nitrogen metabolism; urea cycle; L-ornithine and urea from L-arginine: step 1/1. Functionally, catalyzes the hydrolysis of L-arginine to urea and L-ornithine. The latter can be utilized in the urea cycle or as a precursor for the synthesis of both polyamines and proline. The protein is Arginase 1, mitochondrial of Oryza sativa subsp. indica (Rice).